The primary structure comprises 279 residues: Bifunctional protein FolD 1 (279 aa).

NADP(+)-binding positions include 166 to 168 (GRS) and serine 191.

Belongs to the tetrahydrofolate dehydrogenase/cyclohydrolase family. Homodimer.

It catalyses the reaction (6R)-5,10-methylene-5,6,7,8-tetrahydrofolate + NADP(+) = (6R)-5,10-methenyltetrahydrofolate + NADPH. The enzyme catalyses (6R)-5,10-methenyltetrahydrofolate + H2O = (6R)-10-formyltetrahydrofolate + H(+). Its pathway is one-carbon metabolism; tetrahydrofolate interconversion. Catalyzes the oxidation of 5,10-methylenetetrahydrofolate to 5,10-methenyltetrahydrofolate and then the hydrolysis of 5,10-methenyltetrahydrofolate to 10-formyltetrahydrofolate. In Salinispora arenicola (strain CNS-205), this protein is Bifunctional protein FolD 1.